We begin with the raw amino-acid sequence, 209 residues long: FMN-dependent NADH:quinone oxidoreductase (209 aa).

FMN-binding positions include Ser-9 and 15–17; that span reads SNS.

Belongs to the azoreductase type 1 family. As to quaternary structure, homodimer. The cofactor is FMN.

The enzyme catalyses 2 a quinone + NADH + H(+) = 2 a 1,4-benzosemiquinone + NAD(+). It catalyses the reaction N,N-dimethyl-1,4-phenylenediamine + anthranilate + 2 NAD(+) = 2-(4-dimethylaminophenyl)diazenylbenzoate + 2 NADH + 2 H(+). Quinone reductase that provides resistance to thiol-specific stress caused by electrophilic quinones. Its function is as follows. Also exhibits azoreductase activity. Catalyzes the reductive cleavage of the azo bond in aromatic azo compounds to the corresponding amines. In Bordetella bronchiseptica (strain ATCC BAA-588 / NCTC 13252 / RB50) (Alcaligenes bronchisepticus), this protein is FMN-dependent NADH:quinone oxidoreductase.